We begin with the raw amino-acid sequence, 92 residues long: Acylphosphatase (92 aa).

An intrachain disulfide couples cysteine 5 to cysteine 49. In terms of domain architecture, Acylphosphatase-like spans 5–92 (CIIAWIYGRV…SGELTDFRIR (88 aa)). Catalysis depends on residues arginine 20 and asparagine 38.

It belongs to the acylphosphatase family.

It carries out the reaction an acyl phosphate + H2O = a carboxylate + phosphate + H(+). The polypeptide is Acylphosphatase (Shigella boydii serotype 4 (strain Sb227)).